The sequence spans 367 residues: o-succinylbenzoate synthase (367 aa).

Lys164 acts as the Proton donor in catalysis. 3 residues coordinate Mg(2+): Asp189, Glu214, and Asp239. Lys263 acts as the Proton acceptor in catalysis.

The protein belongs to the mandelate racemase/muconate lactonizing enzyme family. MenC type 2 subfamily. Homodimer. A divalent metal cation is required as a cofactor.

The enzyme catalyses (1R,6R)-6-hydroxy-2-succinyl-cyclohexa-2,4-diene-1-carboxylate = 2-succinylbenzoate + H2O. The protein operates within quinol/quinone metabolism; 1,4-dihydroxy-2-naphthoate biosynthesis; 1,4-dihydroxy-2-naphthoate from chorismate: step 4/7. Its pathway is quinol/quinone metabolism; menaquinone biosynthesis. In terms of biological role, converts 2-succinyl-6-hydroxy-2,4-cyclohexadiene-1-carboxylate (SHCHC) to 2-succinylbenzoate (OSB). Also acts as a N-succinylamino acid racemase (NSAR) that catalyzes the racemization of N-succinyl-L-phenylglycine. Since the gene is encoded in a menaquinone synthesis operon, OSB synthase is probably the physiological activity. A pathway that requires NSAR activity has not been identified in this species, so whether NSAR is also a biological activity is unknown. The chain is o-succinylbenzoate synthase from Enterococcus faecalis (strain ATCC 700802 / V583).